The primary structure comprises 614 residues: UvrABC system protein C (614 aa).

A GIY-YIG domain is found at 26 to 104 (NLPGVYKMLG…IKEHRPPYNV (79 aa)). One can recognise a UVR domain in the interval 215–250 (SDIHTTLIEKMEHSAEALDFEKAAFYRDQLSMLREV).

The protein belongs to the UvrC family. In terms of assembly, interacts with UvrB in an incision complex.

The protein localises to the cytoplasm. In terms of biological role, the UvrABC repair system catalyzes the recognition and processing of DNA lesions. UvrC both incises the 5' and 3' sides of the lesion. The N-terminal half is responsible for the 3' incision and the C-terminal half is responsible for the 5' incision. The sequence is that of UvrABC system protein C from Psychrobacter sp. (strain PRwf-1).